We begin with the raw amino-acid sequence, 133 residues long: Histone H2A.1 (133 aa).

Residues 1 to 23 (MSTTGKGGKAKGKTASSKQVSRS) are disordered. The residue at position 2 (Ser-2) is an N-acetylserine. Lys-6, Lys-9, Lys-11, Lys-13, and Lys-18 each carry N6-acetyllysine. Ser-123 bears the Phosphoserine mark. A Glycyl lysine isopeptide (Lys-Gly) (interchain with G-Cter in ubiquitin) cross-link involves residue Lys-124.

This sequence belongs to the histone H2A family. In terms of assembly, the nucleosome is a histone octamer containing two molecules each of H2A, H2B, H3 and H4 assembled in one H3-H4 heterotetramer and two H2A-H2B heterodimers. The octamer wraps approximately 147 bp of DNA. Post-translationally, monoubiquitination of Lys-124 gives a specific tag for epigenetic transcriptional repression. Acetylation occurs almost exclusively in the MAC.

The protein localises to the nucleus. Its subcellular location is the chromosome. In terms of biological role, core component of nucleosome. Nucleosomes wrap and compact DNA into chromatin, limiting DNA accessibility to the cellular machineries which require DNA as a template. Histones thereby play a central role in transcription regulation, DNA repair, DNA replication and chromosomal stability. DNA accessibility is regulated via a complex set of post-translational modifications of histones, also called histone code, and nucleosome remodeling. The sequence is that of Histone H2A.1 (HTA2) from Tetrahymena thermophila (strain SB210).